The sequence spans 31 residues: uncharacterized protein (31 aa).

The segment at 1 to 31 is disordered; the sequence is MKKLERMSEVSQMCSEAKKNRKRMSVVSSVA.

This is an uncharacterized protein from Sulfolobus islandicus filamentous virus (isolate Iceland/Hveragerdi) (SIFV).